Reading from the N-terminus, the 418-residue chain is Alpha-(1-&gt;3)-arabinofuranosyltransferase (418 aa).

A run of 11 helical transmembrane segments spans residues 25 to 45 (NAVA…VLAI), 81 to 101 (YLYN…THFT), 102 to 122 (LARW…FGLL), 125 to 145 (LSGW…AMLT), 153 to 173 (IFSN…WCVV), 183 to 203 (VIGL…LPLV), 210 to 230 (LILG…LVPG), 266 to 286 (MEIT…LALL), 293 to 312 (PYFW…FFLS), 327 to 349 (IFTL…AYFF), and 372 to 392 (ATVG…IWFI).

Belongs to the glycosyltransferase 87 family.

The protein localises to the cell membrane. The catalysed reaction is Adds an alpha-D-arabinofuranosyl group from trans,octacis-decaprenylphospho-beta-D-arabinofuranose at the 3-O-position of an alpha-(1-&gt;5)-arabinofuranan chain attached to a beta-(1-&gt;5)-galactofuranan chain.. The protein operates within cell wall biogenesis; cell wall polysaccharide biosynthesis. Involved in the biosynthesis of the arabinogalactan (AG) region of the mycolylarabinogalactan-peptidoglycan (mAGP) complex, an essential component of the corynebacterial cell wall. Catalyzes the addition of an arabinofuranosyl (Araf) residue from the sugar donor beta-D-arabinofuranosyl-1-monophosphoryldecaprenol (DPA) on the C-3 of an alpha-(1-&gt;5)-linked Araf from the arabinan backbone of AG. The sequence is that of Alpha-(1-&gt;3)-arabinofuranosyltransferase from Corynebacterium glutamicum (strain ATCC 13032 / DSM 20300 / JCM 1318 / BCRC 11384 / CCUG 27702 / LMG 3730 / NBRC 12168 / NCIMB 10025 / NRRL B-2784 / 534).